We begin with the raw amino-acid sequence, 216 residues long: Probable GTP-binding protein EngB (216 aa).

The region spanning 27-201 is the EngB-type G domain; sequence EGIEVAFAGR…REKLDTWFSE (175 aa). Residues 35 to 42, 62 to 66, 80 to 83, 147 to 150, and 180 to 182 each bind GTP; these read GRSNAGKS, GRTQL, DLPG, TKAD, and FSS. Mg(2+) is bound by residues serine 42 and threonine 64.

The protein belongs to the TRAFAC class TrmE-Era-EngA-EngB-Septin-like GTPase superfamily. EngB GTPase family. It depends on Mg(2+) as a cofactor.

Necessary for normal cell division and for the maintenance of normal septation. The polypeptide is Probable GTP-binding protein EngB (Yersinia pseudotuberculosis serotype O:1b (strain IP 31758)).